The sequence spans 909 residues: Protein NLP1 (909 aa).

Disordered regions lie at residues 51 to 71 (KSLK…DNSP), 536 to 556 (KEDP…PVPN), 568 to 605 (ASTP…RAKT), and 690 to 745 (NSPN…ENTG). A compositionally biased stretch (polar residues) spans 55 to 70 (QTEQSPSASTAMNDNS). In terms of domain architecture, RWP-RK spans 595-676 (RRPGEKKRAK…MDSVQGAQGS (82 aa)). A compositionally biased stretch (polar residues) spans 690–716 (NSPNMSSNGPSLKSNEQPSHLNAQTDN). A compositionally biased stretch (low complexity) spans 725-745 (RSPSSSCSKSSGSSNNNENTG). In terms of domain architecture, PB1 spans 811–894 (AIKVKATFGE…HTIKISLNEA (84 aa)).

Its subcellular location is the nucleus. Probable transcription factor. The sequence is that of Protein NLP1 (NLP1) from Arabidopsis thaliana (Mouse-ear cress).